Reading from the N-terminus, the 326-residue chain is Ribosomal RNA small subunit methyltransferase H (326 aa).

S-adenosyl-L-methionine is bound by residues 35–37 (GGY), Asp-53, Phe-80, Asp-101, and Gln-108. The tract at residues 260 to 306 (EGVSRHLPQASNAGAGNPPPSFQAVSRRAVKPLDAETRVNPRSRSAR) is disordered.

This sequence belongs to the methyltransferase superfamily. RsmH family.

It is found in the cytoplasm. The catalysed reaction is cytidine(1402) in 16S rRNA + S-adenosyl-L-methionine = N(4)-methylcytidine(1402) in 16S rRNA + S-adenosyl-L-homocysteine + H(+). Specifically methylates the N4 position of cytidine in position 1402 (C1402) of 16S rRNA. The chain is Ribosomal RNA small subunit methyltransferase H from Rhodospirillum rubrum (strain ATCC 11170 / ATH 1.1.1 / DSM 467 / LMG 4362 / NCIMB 8255 / S1).